A 208-amino-acid polypeptide reads, in one-letter code: Uracil phosphoribosyltransferase (208 aa).

Residues Arg-78, Arg-103, and 130–138 (DPMLATGGS) each bind 5-phospho-alpha-D-ribose 1-diphosphate. Residues Ile-193 and 198-200 (GDA) contribute to the uracil site. Residue Asp-199 coordinates 5-phospho-alpha-D-ribose 1-diphosphate.

This sequence belongs to the UPRTase family. Requires Mg(2+) as cofactor.

The enzyme catalyses UMP + diphosphate = 5-phospho-alpha-D-ribose 1-diphosphate + uracil. The protein operates within pyrimidine metabolism; UMP biosynthesis via salvage pathway; UMP from uracil: step 1/1. With respect to regulation, allosterically activated by GTP. Its function is as follows. Catalyzes the conversion of uracil and 5-phospho-alpha-D-ribose 1-diphosphate (PRPP) to UMP and diphosphate. This Trichlorobacter lovleyi (strain ATCC BAA-1151 / DSM 17278 / SZ) (Geobacter lovleyi) protein is Uracil phosphoribosyltransferase.